The chain runs to 690 residues: Methionine--tRNA ligase (690 aa).

The 'HIGH' region motif lies at 20–30 (PYANGSIHLGH). Zn(2+) contacts are provided by Cys-151, Cys-154, Cys-164, and Cys-167. The short motif at 337-341 (KMSKS) is the 'KMSKS' region element. Lys-340 contacts ATP. Positions 589-690 (DFAKVDLRIA…EGAQPGMRVM (102 aa)) constitute a tRNA-binding domain.

The protein belongs to the class-I aminoacyl-tRNA synthetase family. MetG type 1 subfamily. Homodimer. Zn(2+) serves as cofactor.

The protein localises to the cytoplasm. It catalyses the reaction tRNA(Met) + L-methionine + ATP = L-methionyl-tRNA(Met) + AMP + diphosphate. In terms of biological role, is required not only for elongation of protein synthesis but also for the initiation of all mRNA translation through initiator tRNA(fMet) aminoacylation. This Vibrio vulnificus (strain YJ016) protein is Methionine--tRNA ligase.